The following is a 32-amino-acid chain: Photosystem II reaction center protein T (32 aa).

A helical transmembrane segment spans residues Ala3–Phe23.

The protein belongs to the PsbT family. As to quaternary structure, PSII is composed of 1 copy each of membrane proteins PsbA, PsbB, PsbC, PsbD, PsbE, PsbF, PsbH, PsbI, PsbJ, PsbK, PsbL, PsbM, PsbT, PsbX, PsbY, PsbZ, Psb30/Ycf12, at least 3 peripheral proteins of the oxygen-evolving complex and a large number of cofactors. It forms dimeric complexes.

It localises to the plastid. The protein localises to the chloroplast thylakoid membrane. Functionally, found at the monomer-monomer interface of the photosystem II (PS II) dimer, plays a role in assembly and dimerization of PSII. PSII is a light-driven water plastoquinone oxidoreductase, using light energy to abstract electrons from H(2)O, generating a proton gradient subsequently used for ATP formation. The protein is Photosystem II reaction center protein T of Thalassiosira pseudonana (Marine diatom).